Consider the following 206-residue polypeptide: Large ribosomal subunit protein uL4 (206 aa).

The protein belongs to the universal ribosomal protein uL4 family. In terms of assembly, part of the 50S ribosomal subunit.

Its function is as follows. One of the primary rRNA binding proteins, this protein initially binds near the 5'-end of the 23S rRNA. It is important during the early stages of 50S assembly. It makes multiple contacts with different domains of the 23S rRNA in the assembled 50S subunit and ribosome. In terms of biological role, forms part of the polypeptide exit tunnel. The protein is Large ribosomal subunit protein uL4 of Bradyrhizobium sp. (strain ORS 278).